Reading from the N-terminus, the 168-residue chain is Ribosome maturation factor RimM (168 aa).

The PRC barrel domain occupies 96–168 (VDEYYWGDLI…TIRVDWQKDW (73 aa)).

The protein belongs to the RimM family. Binds ribosomal protein uS19.

The protein resides in the cytoplasm. Functionally, an accessory protein needed during the final step in the assembly of 30S ribosomal subunit, possibly for assembly of the head region. Essential for efficient processing of 16S rRNA. May be needed both before and after RbfA during the maturation of 16S rRNA. It has affinity for free ribosomal 30S subunits but not for 70S ribosomes. The chain is Ribosome maturation factor RimM from Aromatoleum aromaticum (strain DSM 19018 / LMG 30748 / EbN1) (Azoarcus sp. (strain EbN1)).